Here is a 404-residue protein sequence, read N- to C-terminus: Tryptophan synthase beta chain (404 aa).

K94 carries the N6-(pyridoxal phosphate)lysine modification.

Belongs to the TrpB family. Tetramer of two alpha and two beta chains. The cofactor is pyridoxal 5'-phosphate.

It carries out the reaction (1S,2R)-1-C-(indol-3-yl)glycerol 3-phosphate + L-serine = D-glyceraldehyde 3-phosphate + L-tryptophan + H2O. It functions in the pathway amino-acid biosynthesis; L-tryptophan biosynthesis; L-tryptophan from chorismate: step 5/5. The beta subunit is responsible for the synthesis of L-tryptophan from indole and L-serine. The chain is Tryptophan synthase beta chain from Staphylococcus aureus (strain bovine RF122 / ET3-1).